We begin with the raw amino-acid sequence, 709 residues long: Solute carrier family 15 member 1 (709 aa).

Residues 1 to 21 (MGMSKSRGCFGYPLSIFFIVV) form a helical membrane-spanning segment. Over 22-53 (NEFCERFSYYGMRALLVLYFRNFLGWDDNLST) the chain is Extracellular. N50 is a glycosylation site (N-linked (GlcNAc...) asparagine). Residues 54–74 (AIYHTFVALCYLTPILGALIA) traverse the membrane as a helical segment. Over 75-82 (DSWLGKFK) the chain is Cytoplasmic. Residues 83–103 (TIVSLSIVYTIGQAVISVSSI) traverse the membrane as a helical segment. Over 104–118 (NDLTDHDHNGSPDSL) the chain is Extracellular. The chain crosses the membrane as a helical span at residues 119–139 (PVHVALSMVGLALIALGTGGI). Over 140 to 161 (KPCVSAFGGDQFEEGQEKQRNR) the chain is Cytoplasmic. The chain crosses the membrane as a helical span at residues 162–182 (FFSIFYLAINGGSLLSTIITP). Topologically, residues 183 to 198 (ILRVQQCGIHSQQACY) are extracellular. Residues 199–219 (PLAFGVPAALMAVALIVFVLG) traverse the membrane as a helical segment. Over 220 to 276 (SGMYKKFQPQGNIMGKVAKCIGFAIKNRFRHRSKAYPKREHWLDWAKEKYDERLISQ) the chain is Cytoplasmic. A helical membrane pass occupies residues 277-297 (IKMVTKVMFLYIPLPMFWALF). Residues 298–327 (DQQGSRWTLQATTMNGKIGAIEIQPDQMQT) are Extracellular-facing. Residues 328-348 (VNAILIVIMVPIVDAVVYPLI) traverse the membrane as a helical segment. The Cytoplasmic portion of the chain corresponds to 349-361 (AKCGFNFTSLKKM). Residues 362–382 (TVGMFLASMAFVVAAIVQVEI) form a helical membrane-spanning segment. The Extracellular segment spans residues 383–585 (DKTLPVFPGG…PPNTVNMALQ (203 aa)). Positions 383 to 585 (DKTLPVFPGG…PPNTVNMALQ (203 aa)) are extracellular domain (ECD). 4 N-linked (GlcNAc...) asparagine glycosylation sites follow: N406, N439, N515, and N532. The helical transmembrane segment at 586–606 (IPQYFLLTCGEVVFSVTGLEF) threads the bilayer. Topologically, residues 607–620 (SYSQAPSNMKSVLQ) are cytoplasmic. The chain crosses the membrane as a helical span at residues 621-641 (AGWLLTVAVGNIIVLIVAGAG). Topologically, residues 642-646 (HFPKQ) are extracellular. The chain crosses the membrane as a helical span at residues 647–667 (WAEYILFASLLLVVCVIFAIM). Residues 668-709 (ARFYTYINPAEIEAQFDEDEKKKGIGKENPYSSLEPVSQTNM) are Cytoplasmic-facing. The disordered stretch occupies residues 690 to 709 (KGIGKENPYSSLEPVSQTNM). The segment covering 697–709 (PYSSLEPVSQTNM) has biased composition (polar residues).

The protein belongs to the major facilitator superfamily. Proton-dependent oligopeptide transporter (POT/PTR) (TC 2.A.17) family. Interacts (via extracellular domain region) with trypsin.

It is found in the apical cell membrane. It carries out the reaction a dipeptide(out) + H(+)(out) = a dipeptide(in) + H(+)(in). The catalysed reaction is an L-amino acid tripeptide(out) + H(+)(out) = an L-amino acid tripeptide(in) + H(+)(in). It catalyses the reaction L-alanyl-L-lysine(out) + H(+)(out) = L-alanyl-L-lysine(in) + H(+)(in). The enzyme catalyses L-alanyl-L-proline(out) + H(+)(out) = L-alanyl-L-proline(in) + H(+)(in). It carries out the reaction L-alanyl-L-valine(out) + H(+)(out) = L-alanyl-L-valine(in) + H(+)(in). The catalysed reaction is carnosine(out) + H(+)(out) = carnosine(in) + H(+)(in). It catalyses the reaction glycyl-L-glutamine(out) + H(+)(out) = glycyl-L-glutamine(in) + H(+)(in). The enzyme catalyses glycyl-L-leucine(out) + H(+)(out) = glycyl-L-leucine(in) + H(+)(in). It carries out the reaction glycyl-L-proline(out) + H(+)(out) = glycyl-L-proline(in) + H(+)(in). The catalysed reaction is glycyl-sarcosine(out) + H(+)(out) = glycyl-sarcosine(in) + H(+)(in). It catalyses the reaction L-leucyl-L-leucine(out) + H(+)(out) = L-leucyl-L-leucine(in) + H(+)(in). The enzyme catalyses L-leucyl-L-proline(out) + H(+)(out) = L-leucyl-L-proline(in) + H(+)(in). It carries out the reaction L-phenylalanyl-L-leucine(out) + H(+)(out) = L-phenylalanyl-L-leucine(in) + H(+)(in). The catalysed reaction is L-phenylalanyl-L-phenylalanine(out) + H(+)(out) = L-phenylalanyl-L-phenylalanine(in) + H(+)(in). It catalyses the reaction L-lysyl-glycine(out) + H(+)(out) = L-lysyl-glycine(in) + H(+)(in). The enzyme catalyses L-tyrosylglycine(out) + H(+)(out) = L-tyrosylglycine(in) + H(+)(in). It carries out the reaction L-alanyl-L-aspartate(out) + 2 H(+)(out) = L-alanyl-L-aspartate(in) + 2 H(+)(in). The catalysed reaction is L-aspartyl-glycine(out) + 2 H(+)(out) = L-aspartyl-glycine(in) + 2 H(+)(in). It catalyses the reaction glycyl-L-aspartate(out) + 2 H(+)(out) = glycyl-L-aspartate(in) + 2 H(+)(in). The enzyme catalyses glycyl-L-glutamate(out) + 2 H(+)(out) = glycyl-L-glutamate(in) + 2 H(+)(in). It carries out the reaction L-alanyl-L-leucyl-L-alanine(out) + H(+)(out) = L-alanyl-L-leucyl-L-alanine(in) + H(+)(in). The catalysed reaction is L-alanyl-L-prolylglycine(out) + H(+)(out) = L-alanyl-L-prolylglycine(in) + H(+)(in). It catalyses the reaction glycylglycyl-L-isoleucine(out) + H(+)(out) = glycylglycyl-L-isoleucine(in) + H(+)(in). The enzyme catalyses glycylglycyl-L-proline(out) + H(+)(out) = glycylglycyl-L-proline(in) + H(+)(in). It carries out the reaction L-methionyl-L-phenylalanyl-L-methionine(out) + H(+)(out) = L-methionyl-L-phenylalanyl-L-methionine(in) + H(+)(in). The catalysed reaction is N-acetyl-D-muramoyl-L-alanyl-D-isoglutamine(out) + 2 H(+)(out) = N-acetyl-D-muramoyl-L-alanyl-D-isoglutamine(in) + 2 H(+)(in). It catalyses the reaction N(alpha)-formyl-L-methionyl-L-leucyl-L-phenylalanine(out) + 2 H(+)(out) = N(alpha)-formyl-L-methionyl-L-leucyl-L-phenylalanine(in) + 2 H(+)(in). Electrogenic proton-coupled amino-acid transporter that transports oligopeptides of 2 to 4 amino acids with a preference for dipeptides. Transports neutral and monovalently charged peptides with a proton to peptide stoichiometry of 1:1 or 2:1. Primarily responsible for the absorption of dietary di- and tripeptides from the small intestinal lumen. Mediates transepithelial transport of muramyl and N-formylated bacterial dipeptides contributing to recognition of pathogenic bacteria by the mucosal immune system. The protein is Solute carrier family 15 member 1 of Mus musculus (Mouse).